The following is an 88-amino-acid chain: Small ribosomal subunit protein bS20 (88 aa).

Positions 1–27 are disordered; the sequence is MANSKSAKKRALQSEKRRQHNASRRSM.

Belongs to the bacterial ribosomal protein bS20 family.

In terms of biological role, binds directly to 16S ribosomal RNA. This is Small ribosomal subunit protein bS20 from Shewanella loihica (strain ATCC BAA-1088 / PV-4).